Here is a 117-residue protein sequence, read N- to C-terminus: G antigen 6 (117 aa).

The interval 1–117 (MSWRGRSTYY…PEEGEKQSQC (117 aa)) is disordered. Composition is skewed to acidic residues over residues 32 to 45 (FSDEVEPATPEEGE) and 87 to 96 (ECEDGPDGQE). Over residues 103–117 (EEVKTPEEGEKQSQC) the composition is skewed to basic and acidic residues.

Belongs to the GAGE family. In terms of tissue distribution, expressed in a variety of tumor tissues but not in normal tissues, except testis.

The chain is G antigen 6 (GAGE6) from Homo sapiens (Human).